The primary structure comprises 134 residues: Beta-synuclein (134 aa).

2 tandem repeats follow at residues 20 to 30 and 31 to 41. The segment at 20-67 is 4 X 11 AA tandem repeats of [EGS]-K-T-K-[EQ]-[GQ]-V-X(4); it reads EKTKQGVTEAAEKTKEGVLYVGSKTKEGVVQGVASVAEKTKEQASHLG. The stretch at 42-56 is one 3; approximate repeat; sequence SKTKEGVVQGVASVA. Repeat unit 4 spans residues 57–67; the sequence is EKTKEQASHLG. The interval 97–134 is disordered; that stretch reads EVAQEAAEEPLIEPLMEPEGESYEEQPQEEYQEYEPEA. Residues 98 to 134 are compositionally biased toward acidic residues; sequence VAQEAAEEPLIEPLMEPEGESYEEQPQEEYQEYEPEA. Serine 118 carries the post-translational modification Phosphoserine; by BARK1, CK2 and GRK5.

It belongs to the synuclein family. Phosphorylated. Phosphorylation by G-protein coupled receptor kinases (GRK) is more efficient than phosphorylation by CK1, CK2 and CaM-kinase II. In terms of tissue distribution, specifically present in synapses around neurons but not in glial cells.

It localises to the cytoplasm. Functionally, may be involved in neuronal plasticity. The chain is Beta-synuclein (SNCB) from Bos taurus (Bovine).